The sequence spans 391 residues: ETS-related transcription factor Elf-3 (391 aa).

Residues Asp65–Ser151 enclose the PNT domain. The tract at residues Tyr200–Arg271 is disordered. Residues Pro211–Ala229 are compositionally biased toward polar residues. Basic and acidic residues predominate over residues Thr242–Lys261. The span at His262–Arg271 shows a compositional bias: basic residues. Positions Thr293–Gly375 form a DNA-binding region, ETS.

It belongs to the ETS family. As to quaternary structure, interacts with TBP. Interacts with CREBBP and EP300; these act as transcriptional coactivators of ELF3 and positively modulate its function. Interacts with XRCC5/KU86 and XRCC6/KU70; these inhibit the ability of ELF3 to bind DNA and negatively modulate its transcriptional activity. Associated with CLND7 and POU2F3. Interacts with ZNF768. In terms of tissue distribution, expressed in small intestine, colon, lung, kidney and uterus. Also expressed in the corneal epithelium and conjunctiva of the developing and adult eye. Not detected in liver, spleen, thymus, brain, heart, skeletal muscle or ovary.

It is found in the cytoplasm. It localises to the nucleus. Functionally, transcriptional activator that binds and transactivates ETS sequences containing the consensus nucleotide core sequence GGA[AT]. Acts synergistically with POU2F3 to transactivate the SPRR2A promoter and with RUNX1 to transactivate the ANGPT1 promoter. Also transactivates collagenase, CCL20, CLND7, FLG, KRT8, NOS2, PTGS2, SPRR2B, TGFBR2 and TGM3 promoters. Represses KRT4 promoter activity. Involved in mediating vascular inflammation. May play an important role in epithelial cell differentiation and tumorigenesis. May be a critical downstream effector of the ERBB2 signaling pathway. May be associated with mammary gland development and involution. Plays an important role in the regulation of transcription with TATA-less promoters in preimplantation embryos, which is essential in preimplantation development. The sequence is that of ETS-related transcription factor Elf-3 from Mus musculus (Mouse).